The following is a 70-amino-acid chain: Large ribosomal subunit protein bL31 (70 aa).

It belongs to the bacterial ribosomal protein bL31 family. Type A subfamily. In terms of assembly, part of the 50S ribosomal subunit.

Functionally, binds the 23S rRNA. This Chlorobium chlorochromatii (strain CaD3) protein is Large ribosomal subunit protein bL31.